A 630-amino-acid chain; its full sequence is GTPase-activating protein NEL1 (630 aa).

It belongs to the SEC23/SEC24 family. SEC23 subfamily.

It is found in the cytoplasm. The protein localises to the nucleus. Functionally, acts as a GTPase-activating protein (GAP) for SAR1. Contrary to its SEC23 homolog, NEL1 does not associate with SEC24 and its homologs, nor does it associate with the COPII components, suggesting that it is unlikely that NEL1 functions as a structural component of the vesicle coat machinery. May function as a signaling molecule. This Saccharomyces cerevisiae (strain ATCC 204508 / S288c) (Baker's yeast) protein is GTPase-activating protein NEL1.